A 255-amino-acid polypeptide reads, in one-letter code: 4-hydroxy-tetrahydrodipicolinate reductase (255 aa).

NAD(+) contacts are provided by residues 8–13 (GASGRM), 89–91 (GTT), and 114–117 (SSNY). The active-site Proton donor/acceptor is His146. A (S)-2,3,4,5-tetrahydrodipicolinate-binding site is contributed by His147. The Proton donor role is filled by Lys150. Position 156–157 (156–157 (GT)) interacts with (S)-2,3,4,5-tetrahydrodipicolinate.

This sequence belongs to the DapB family.

The protein localises to the cytoplasm. The enzyme catalyses (S)-2,3,4,5-tetrahydrodipicolinate + NAD(+) + H2O = (2S,4S)-4-hydroxy-2,3,4,5-tetrahydrodipicolinate + NADH + H(+). The catalysed reaction is (S)-2,3,4,5-tetrahydrodipicolinate + NADP(+) + H2O = (2S,4S)-4-hydroxy-2,3,4,5-tetrahydrodipicolinate + NADPH + H(+). It participates in amino-acid biosynthesis; L-lysine biosynthesis via DAP pathway; (S)-tetrahydrodipicolinate from L-aspartate: step 4/4. Catalyzes the conversion of 4-hydroxy-tetrahydrodipicolinate (HTPA) to tetrahydrodipicolinate. The sequence is that of 4-hydroxy-tetrahydrodipicolinate reductase from Methanoregula boonei (strain DSM 21154 / JCM 14090 / 6A8).